A 300-amino-acid polypeptide reads, in one-letter code: B3 domain-containing protein At5g57720 (300 aa).

A DNA-binding region (TF-B3) is located at residues 11–105 (PDFLKIFNSH…SFWVRIHRNG (95 aa)). Residues 115-142 (KIQEISDDEDETNGDGDPHMEEEGDTDE) form a disordered region. Residues 119-129 (ISDDEDETNGD) show a composition bias toward acidic residues.

Its subcellular location is the nucleus. The sequence is that of B3 domain-containing protein At5g57720 from Arabidopsis thaliana (Mouse-ear cress).